The following is a 241-amino-acid chain: Probable transcriptional regulatory protein stu0195 (241 aa).

It belongs to the TACO1 family. YeeN subfamily.

It localises to the cytoplasm. This chain is Probable transcriptional regulatory protein stu0195, found in Streptococcus thermophilus (strain ATCC BAA-250 / LMG 18311).